The sequence spans 270 residues: Hydroxyethylthiazole kinase (270 aa).

Methionine 44 is a binding site for substrate. Positions 119 and 165 each coordinate ATP. Glycine 192 contacts substrate.

The protein belongs to the Thz kinase family. The cofactor is Mg(2+).

The catalysed reaction is 5-(2-hydroxyethyl)-4-methylthiazole + ATP = 4-methyl-5-(2-phosphooxyethyl)-thiazole + ADP + H(+). It participates in cofactor biosynthesis; thiamine diphosphate biosynthesis; 4-methyl-5-(2-phosphoethyl)-thiazole from 5-(2-hydroxyethyl)-4-methylthiazole: step 1/1. Its function is as follows. Catalyzes the phosphorylation of the hydroxyl group of 4-methyl-5-beta-hydroxyethylthiazole (THZ). This is Hydroxyethylthiazole kinase from Corynebacterium efficiens (strain DSM 44549 / YS-314 / AJ 12310 / JCM 11189 / NBRC 100395).